A 238-amino-acid polypeptide reads, in one-letter code: Ribitol-5-phosphate cytidylyltransferase 2 (238 aa).

Residues 7 to 10 (LAGG) and 81 to 87 (GTDRNET) contribute to the CTP site.

Belongs to the IspD/TarI cytidylyltransferase family. TarI subfamily.

It carries out the reaction D-ribitol 5-phosphate + CTP + H(+) = CDP-L-ribitol + diphosphate. It functions in the pathway cell wall biogenesis; poly(ribitol phosphate) teichoic acid biosynthesis. Its function is as follows. Catalyzes the transfer of the cytidylyl group of CTP to D-ribitol 5-phosphate. This Staphylococcus aureus (strain MSSA476) protein is Ribitol-5-phosphate cytidylyltransferase 2.